We begin with the raw amino-acid sequence, 710 residues long: uncharacterized protein (710 aa).

The disordered stretch occupies residues 1 to 20 (MKQRQARLIGTPSQTRRQQE). Residues 13 to 42 (SQTRRQQELAEKLEKVKEVLEDEKKRQFNE) adopt a coiled-coil conformation.

This sequence belongs to the IIV-6 268L family.

This is an uncharacterized protein from Invertebrate iridescent virus 6 (IIV-6).